We begin with the raw amino-acid sequence, 885 residues long: Translation initiation factor IF-2 (885 aa).

Disordered stretches follow at residues 135–159 and 184–289; these read KAKA…AAAE and QAEA…PESM. Basic and acidic residues predominate over residues 184-232; the sequence is QAEATKRKQDEEAAKAAEKARLLAEENSKRWAEEERQRLEAERYSDHHI. A compositionally biased stretch (basic residues) spans 253 to 266; it reads GRRARNKNTAKSKR. The segment covering 267–276 has biased composition (basic and acidic residues); it reads GGKDARDGRE. Positions 385–554 constitute a tr-type G domain; sequence PRAPVVTIMG…LLQAEVLELK (170 aa). The interval 394–401 is G1; that stretch reads GHVDHGKT. Residue 394 to 401 participates in GTP binding; it reads GHVDHGKT. The interval 419-423 is G2; sequence GITQH. Positions 440–443 are G3; that stretch reads DTPG. GTP-binding positions include 440–444 and 494–497; these read DTPGH and NKMD. The segment at 494 to 497 is G4; that stretch reads NKMD. Residues 530–532 are G5; sequence SAK.

The protein belongs to the TRAFAC class translation factor GTPase superfamily. Classic translation factor GTPase family. IF-2 subfamily.

The protein resides in the cytoplasm. Its function is as follows. One of the essential components for the initiation of protein synthesis. Protects formylmethionyl-tRNA from spontaneous hydrolysis and promotes its binding to the 30S ribosomal subunits. Also involved in the hydrolysis of GTP during the formation of the 70S ribosomal complex. This is Translation initiation factor IF-2 from Shewanella sp. (strain MR-7).